Consider the following 301-residue polypeptide: MLTMSELSEVEISEILKDAEDFANGKESKTTEQTFVANLFFENSTRTRFSFEVAEKRLGLDVLNFSADASSVQKGETLYDTIRTLESIGTKAVVIRHEQDRYFDELKDQVNIPILNAGDGCGNHPTQCLLDLLTIKQEFGRFEGLKIAIVGDVRHSRVARSNAEALTKLGATIYFASPEEWKDEDNTFGTYKPLDELVPEVDVMMLLRVQHERHDHYETDIMKEYHEKHGLTVEREKRMKEGSIIMHPAPVNRDVEIASELVECERSRIFKQMENGVYVRMAVLKRALPNVLGGMKHELFV.

The carbamoyl phosphate site is built by R46 and T47. K74 is a binding site for L-aspartate. Residues R96, H124, and Q127 each coordinate carbamoyl phosphate. 2 residues coordinate L-aspartate: R157 and R208. Residues A249 and P250 each contribute to the carbamoyl phosphate site.

It belongs to the aspartate/ornithine carbamoyltransferase superfamily. ATCase family. Heterododecamer (2C3:3R2) of six catalytic PyrB chains organized as two trimers (C3), and six regulatory PyrI chains organized as three dimers (R2).

It catalyses the reaction carbamoyl phosphate + L-aspartate = N-carbamoyl-L-aspartate + phosphate + H(+). It functions in the pathway pyrimidine metabolism; UMP biosynthesis via de novo pathway; (S)-dihydroorotate from bicarbonate: step 2/3. In terms of biological role, catalyzes the condensation of carbamoyl phosphate and aspartate to form carbamoyl aspartate and inorganic phosphate, the committed step in the de novo pyrimidine nucleotide biosynthesis pathway. This chain is Aspartate carbamoyltransferase catalytic subunit, found in Bacillus cereus (strain ATCC 14579 / DSM 31 / CCUG 7414 / JCM 2152 / NBRC 15305 / NCIMB 9373 / NCTC 2599 / NRRL B-3711).